The sequence spans 314 residues: GTP-binding protein gtr2 (314 aa).

Residues S17, S18, S37, H118, and D121 each coordinate GTP.

The protein belongs to the GTR/RAG GTP-binding protein family.

It localises to the vacuole membrane. Its subcellular location is the cytoplasm. The protein localises to the nucleus. It catalyses the reaction GTP + H2O = GDP + phosphate + H(+). GTPase involved in activation of the TORC1 signaling pathway, which promotes growth and represses autophagy in nutrient-rich conditions. Also required for TORC1 inactivation during nitrogen starvation. The chain is GTP-binding protein gtr2 (gtr2) from Schizosaccharomyces pombe (strain 972 / ATCC 24843) (Fission yeast).